Here is a 578-residue protein sequence, read N- to C-terminus: Glutamate--tRNA ligase (578 aa).

Residues 97–107 carry the 'HIGH' region motif; the sequence is PNPDFVIHLGN.

The protein belongs to the class-I aminoacyl-tRNA synthetase family. Glutamate--tRNA ligase type 2 subfamily.

It is found in the cytoplasm. The catalysed reaction is tRNA(Glu) + L-glutamate + ATP = L-glutamyl-tRNA(Glu) + AMP + diphosphate. In terms of biological role, catalyzes the attachment of glutamate to tRNA(Glu) in a two-step reaction: glutamate is first activated by ATP to form Glu-AMP and then transferred to the acceptor end of tRNA(Glu). The polypeptide is Glutamate--tRNA ligase (Hyperthermus butylicus (strain DSM 5456 / JCM 9403 / PLM1-5)).